A 587-amino-acid polypeptide reads, in one-letter code: ATP-dependent lipid A-core flippase (587 aa).

5 helical membrane-spanning segments follow: residues 31–51, 68–88, 145–165, 166–186, and 259–279; these read LIVS…LIYL, LKMM…TNFI, GSLI…AVMF, YTSW…AVLI, and VQVI…TPLI. An ABC transmembrane type-1 domain is found at 32–315; that stretch reads IVSGVALVFN…LTAVNAQFQS (284 aa). Residues 347-583 form the ABC transporter domain; sequence LEFKNVSFAY…NGAYKQLHSM (237 aa). 381 to 388 is an ATP binding site; sequence GRSGSGKS.

This sequence belongs to the ABC transporter superfamily. Lipid exporter (TC 3.A.1.106) family. Homodimer.

It localises to the cell inner membrane. The enzyme catalyses ATP + H2O + lipid A-core oligosaccharideSide 1 = ADP + phosphate + lipid A-core oligosaccharideSide 2.. In terms of biological role, involved in lipopolysaccharide (LPS) biosynthesis. Translocates lipid A-core from the inner to the outer leaflet of the inner membrane. Transmembrane domains (TMD) form a pore in the inner membrane and the ATP-binding domain (NBD) is responsible for energy generation. This is ATP-dependent lipid A-core flippase from Haemophilus influenzae (strain ATCC 51907 / DSM 11121 / KW20 / Rd).